A 938-amino-acid chain; its full sequence is Isoleucine--tRNA ligase (938 aa).

A 'HIGH' region motif is present at residues 58–68; sequence PYANGSIHIGH. K183 is subject to N6-acetyllysine. E561 lines the L-isoleucyl-5'-AMP pocket. The 'KMSKS' region signature appears at 602-606; sequence KMSKS. An ATP-binding site is contributed by K605. Residues C901, C904, C921, and C924 each contribute to the Zn(2+) site.

The protein belongs to the class-I aminoacyl-tRNA synthetase family. IleS type 1 subfamily. Monomer. The cofactor is Zn(2+).

The protein localises to the cytoplasm. The enzyme catalyses tRNA(Ile) + L-isoleucine + ATP = L-isoleucyl-tRNA(Ile) + AMP + diphosphate. Its function is as follows. Catalyzes the attachment of isoleucine to tRNA(Ile). As IleRS can inadvertently accommodate and process structurally similar amino acids such as valine, to avoid such errors it has two additional distinct tRNA(Ile)-dependent editing activities. One activity is designated as 'pretransfer' editing and involves the hydrolysis of activated Val-AMP. The other activity is designated 'posttransfer' editing and involves deacylation of mischarged Val-tRNA(Ile). The protein is Isoleucine--tRNA ligase of Escherichia coli (strain ATCC 8739 / DSM 1576 / NBRC 3972 / NCIMB 8545 / WDCM 00012 / Crooks).